Here is a 291-residue protein sequence, read N- to C-terminus: Shikimate dehydrogenase (NADP(+)) (291 aa).

Shikimate contacts are provided by residues 18–20 and Thr-70; that span reads SLS. Lys-74 (proton acceptor) is an active-site residue. Positions 95 and 110 each coordinate shikimate. Residues 134 to 138 and Val-228 each bind NADP(+); that span reads GAGGA. Tyr-230 contributes to the shikimate binding site. Gly-251 is a binding site for NADP(+).

Belongs to the shikimate dehydrogenase family. As to quaternary structure, homodimer.

The catalysed reaction is shikimate + NADP(+) = 3-dehydroshikimate + NADPH + H(+). It participates in metabolic intermediate biosynthesis; chorismate biosynthesis; chorismate from D-erythrose 4-phosphate and phosphoenolpyruvate: step 4/7. Involved in the biosynthesis of the chorismate, which leads to the biosynthesis of aromatic amino acids. Catalyzes the reversible NADPH linked reduction of 3-dehydroshikimate (DHSA) to yield shikimate (SA). The polypeptide is Shikimate dehydrogenase (NADP(+)) (Streptomyces avermitilis (strain ATCC 31267 / DSM 46492 / JCM 5070 / NBRC 14893 / NCIMB 12804 / NRRL 8165 / MA-4680)).